The chain runs to 274 residues: 2-dehydro-3-deoxyphosphooctonate aldolase (274 aa).

Belongs to the KdsA family.

It is found in the cytoplasm. The enzyme catalyses D-arabinose 5-phosphate + phosphoenolpyruvate + H2O = 3-deoxy-alpha-D-manno-2-octulosonate-8-phosphate + phosphate. It participates in carbohydrate biosynthesis; 3-deoxy-D-manno-octulosonate biosynthesis; 3-deoxy-D-manno-octulosonate from D-ribulose 5-phosphate: step 2/3. The protein operates within bacterial outer membrane biogenesis; lipopolysaccharide biosynthesis. This chain is 2-dehydro-3-deoxyphosphooctonate aldolase, found in Rickettsia bellii (strain OSU 85-389).